A 76-amino-acid polypeptide reads, in one-letter code: Large ribosomal subunit protein bL31 (76 aa).

This sequence belongs to the bacterial ribosomal protein bL31 family. Type A subfamily. In terms of assembly, part of the 50S ribosomal subunit.

In terms of biological role, binds the 23S rRNA. This chain is Large ribosomal subunit protein bL31, found in Picosynechococcus sp. (strain ATCC 27264 / PCC 7002 / PR-6) (Agmenellum quadruplicatum).